The following is a 634-amino-acid chain: Acetylcholinesterase (634 aa).

The N-terminal stretch at 1-23 (MKTSDILLLPTVLLTFLFHNCFA) is a signal peptide. Cysteine 91 and cysteine 118 are disulfide-bonded. N-linked (GlcNAc...) asparagine glycans are attached at residues asparagine 133 and asparagine 184. The active-site Acyl-ester intermediate is serine 225. Cysteine 279 and cysteine 290 are disulfide-bonded. An N-linked (GlcNAc...) asparagine glycan is attached at asparagine 283. Glutamate 352 serves as the catalytic Charge relay system. Asparagine 368 carries an N-linked (GlcNAc...) asparagine glycan. A disulfide bond links cysteine 427 and cysteine 580. Catalysis depends on histidine 495, which acts as the Charge relay system. N-linked (GlcNAc...) asparagine glycans are attached at residues asparagine 512 and asparagine 592.

This sequence belongs to the type-B carboxylesterase/lipase family. Dimers and collagen-tailed forms, in which catalytic tetramers are associated with anchoring proteins that attach them to the basal lamina or to cell membranes. In the collagen-tailed forms, subunits are associated with a specific collagen, COLQ, which triggers the formation of isoform T tetramers from dimers.

Its subcellular location is the synapse. It localises to the secreted. The protein localises to the cell membrane. It catalyses the reaction acetylcholine + H2O = choline + acetate + H(+). Terminates signal transduction at the neuromuscular junction by rapid hydrolysis of the acetylcholine released into the synaptic cleft. In Danio rerio (Zebrafish), this protein is Acetylcholinesterase (ache).